We begin with the raw amino-acid sequence, 387 residues long: Succinate--CoA ligase [ADP-forming] subunit beta (387 aa).

One can recognise an ATP-grasp domain in the interval 9–244 (KEVLRKFGVA…LNEEEPSEIE (236 aa)). ATP contacts are provided by residues Lys-46, 53 to 55 (GRG), Glu-99, Cys-102, and Glu-107. Asn-199 and Asp-213 together coordinate Mg(2+). Residues Asn-264 and 321–323 (GIM) each bind substrate.

It belongs to the succinate/malate CoA ligase beta subunit family. As to quaternary structure, heterotetramer of two alpha and two beta subunits. It depends on Mg(2+) as a cofactor.

It catalyses the reaction succinate + ATP + CoA = succinyl-CoA + ADP + phosphate. The enzyme catalyses GTP + succinate + CoA = succinyl-CoA + GDP + phosphate. It participates in carbohydrate metabolism; tricarboxylic acid cycle; succinate from succinyl-CoA (ligase route): step 1/1. Functionally, succinyl-CoA synthetase functions in the citric acid cycle (TCA), coupling the hydrolysis of succinyl-CoA to the synthesis of either ATP or GTP and thus represents the only step of substrate-level phosphorylation in the TCA. The beta subunit provides nucleotide specificity of the enzyme and binds the substrate succinate, while the binding sites for coenzyme A and phosphate are found in the alpha subunit. This is Succinate--CoA ligase [ADP-forming] subunit beta from Bdellovibrio bacteriovorus (strain ATCC 15356 / DSM 50701 / NCIMB 9529 / HD100).